Consider the following 264-residue polypeptide: Phosphonoacetaldehyde hydrolase (264 aa).

The active-site Nucleophile is the Asp9. Residues Asp9 and Ala11 each contribute to the Mg(2+) site. Catalysis depends on Lys50, which acts as the Schiff-base intermediate with substrate. Mg(2+) is bound at residue Asp183.

The protein belongs to the HAD-like hydrolase superfamily. PhnX family. As to quaternary structure, homodimer. The cofactor is Mg(2+).

It carries out the reaction phosphonoacetaldehyde + H2O = acetaldehyde + phosphate + H(+). Its function is as follows. Involved in phosphonate degradation. This chain is Phosphonoacetaldehyde hydrolase (phnX), found in Bacillus cereus.